A 454-amino-acid chain; its full sequence is O-phospho-L-seryl-tRNA:Cys-tRNA synthase 2 (454 aa).

Pyridoxal 5'-phosphate is bound by residues 146–147 (AR), asparagine 251, and 274–276 (SGH). Lysine 277 is subject to N6-(pyridoxal phosphate)lysine.

The protein belongs to the SepCysS family. In terms of assembly, homodimer. Interacts with SepRS. Pyridoxal 5'-phosphate serves as cofactor.

The enzyme catalyses O-phospho-L-seryl-tRNA(Cys) + hydrogen sulfide + H(+) = L-cysteinyl-tRNA(Cys) + phosphate. In terms of biological role, converts O-phospho-L-seryl-tRNA(Cys) (Sep-tRNA(Cys)) to L-cysteinyl-tRNA(Cys) (Cys-tRNA(Cys)). In Methanoregula boonei (strain DSM 21154 / JCM 14090 / 6A8), this protein is O-phospho-L-seryl-tRNA:Cys-tRNA synthase 2.